A 58-amino-acid polypeptide reads, in one-letter code: uncharacterized protein (58 aa).

2 consecutive 4Fe-4S ferredoxin-type domains span residues 2–27 (GIKILEKCVGCGNCVVFCPRRAIKTY) and 28–57 (GVAIVDENKCSNCGICARYCPINAIKVDTS). The [4Fe-4S] cluster site is built by C9, C12, C15, C19, C37, C40, C43, and C47.

Requires [4Fe-4S] cluster as cofactor.

Its function is as follows. Ferredoxins are iron-sulfur proteins that transfer electrons probably in the CO-dehydrogenase complex. This is an uncharacterized protein from Methanocaldococcus jannaschii (strain ATCC 43067 / DSM 2661 / JAL-1 / JCM 10045 / NBRC 100440) (Methanococcus jannaschii).